The following is a 171-amino-acid chain: Ribosome maturation factor RimM (171 aa).

The PRC barrel domain occupies 97-169; sequence DGEFYYHEII…RVDVDIMEGL (73 aa).

Belongs to the RimM family. Binds ribosomal protein uS19.

It localises to the cytoplasm. Functionally, an accessory protein needed during the final step in the assembly of 30S ribosomal subunit, possibly for assembly of the head region. Essential for efficient processing of 16S rRNA. May be needed both before and after RbfA during the maturation of 16S rRNA. It has affinity for free ribosomal 30S subunits but not for 70S ribosomes. In Lactococcus lactis subsp. cremoris (strain MG1363), this protein is Ribosome maturation factor RimM.